The following is a 396-amino-acid chain: Probable glucan endo-1,6-beta-glucosidase B (396 aa).

An N-terminal signal peptide occupies residues 1-17 (MIRRLAAFSALSGLATA). N-linked (GlcNAc...) asparagine glycosylation occurs at Asn30. Glu219 serves as the catalytic Proton donor. Asn272 carries N-linked (GlcNAc...) asparagine glycosylation. Residue Glu320 is the Nucleophile of the active site.

The protein belongs to the glycosyl hydrolase 5 (cellulase A) family.

It localises to the secreted. The enzyme catalyses Random hydrolysis of (1-&gt;6)-linkages in (1-&gt;6)-beta-D-glucans.. Beta-glucanases participate in the metabolism of beta-glucan, the main structural component of the cell wall. Acts on lutean, pustulan and 1,6-oligo-beta-D-glucosides. This Aspergillus fumigatus (strain CBS 144.89 / FGSC A1163 / CEA10) (Neosartorya fumigata) protein is Probable glucan endo-1,6-beta-glucosidase B (exgB).